Here is a 343-residue protein sequence, read N- to C-terminus: Glycerol-3-phosphate dehydrogenase [NAD(P)+] (343 aa).

The NADPH site is built by Ser15, Phe16, Arg36, and Lys110. Sn-glycerol 3-phosphate contacts are provided by Lys110 and Gly138. Ala142 contacts NADPH. The sn-glycerol 3-phosphate site is built by Lys193, Asp246, Ser256, Arg257, and Asn258. The active-site Proton acceptor is the Lys193. An NADPH-binding site is contributed by Arg257. Position 283 (Glu283) interacts with NADPH.

It belongs to the NAD-dependent glycerol-3-phosphate dehydrogenase family.

The protein resides in the cytoplasm. It carries out the reaction sn-glycerol 3-phosphate + NAD(+) = dihydroxyacetone phosphate + NADH + H(+). It catalyses the reaction sn-glycerol 3-phosphate + NADP(+) = dihydroxyacetone phosphate + NADPH + H(+). The protein operates within membrane lipid metabolism; glycerophospholipid metabolism. In terms of biological role, catalyzes the reduction of the glycolytic intermediate dihydroxyacetone phosphate (DHAP) to sn-glycerol 3-phosphate (G3P), the key precursor for phospholipid synthesis. This is Glycerol-3-phosphate dehydrogenase [NAD(P)+] from Alcanivorax borkumensis (strain ATCC 700651 / DSM 11573 / NCIMB 13689 / SK2).